Reading from the N-terminus, the 292-residue chain is NAD kinase (292 aa).

The Proton acceptor role is filled by Asp73. NAD(+) contacts are provided by residues 73 to 74, 147 to 148, His158, Arg175, Asp177, 188 to 193, and Gln247; these read DG, NE, and TAYSLS.

The protein belongs to the NAD kinase family. The cofactor is a divalent metal cation.

The protein resides in the cytoplasm. The enzyme catalyses NAD(+) + ATP = ADP + NADP(+) + H(+). Functionally, involved in the regulation of the intracellular balance of NAD and NADP, and is a key enzyme in the biosynthesis of NADP. Catalyzes specifically the phosphorylation on 2'-hydroxyl of the adenosine moiety of NAD to yield NADP. This chain is NAD kinase, found in Edwardsiella ictaluri (strain 93-146).